A 110-amino-acid polypeptide reads, in one-letter code: Cytochrome bo(3) ubiquinol oxidase subunit 4 (110 aa).

Residues 1–18 (MANAHDTHHEGNHGSVKS) lie on the Cytoplasmic side of the membrane. The helical transmembrane segment at 19-39 (YMIGFILSIILTAIPFGLAMS) threads the bilayer. Residues 40–46 (PSLPKNL) are Periplasmic-facing. The helical transmembrane segment at 47–67 (TVLIIVAMAVIQVVVHLVYFL) threads the bilayer. Topologically, residues 68 to 78 (HMDRSKEQRNN) are cytoplasmic. Residues 79-99 (VWTFLFTTLVIALLVGLSLWI) form a helical membrane-spanning segment. Residues 100 to 110 (MFSIHFEMLAK) lie on the Periplasmic side of the membrane.

Belongs to the cytochrome c oxidase bacterial subunit 4 family. Heterooctamer of two A chains, two B chains, two C chains and two D chains.

It localises to the cell inner membrane. Cytochrome bo(3) ubiquinol terminal oxidase is the component of the aerobic respiratory chain of E.coli that predominates when cells are grown at high aeration. Has proton pump activity across the membrane in addition to electron transfer, pumping 2 protons/electron. This Pseudomonas putida (Arthrobacter siderocapsulatus) protein is Cytochrome bo(3) ubiquinol oxidase subunit 4 (cyoD).